A 493-amino-acid chain; its full sequence is Cobyric acid synthase (493 aa).

Residues 246–440 form the GATase cobBQ-type domain; the sequence is PIDIAVIKMP…IHGVFDGIVF (195 aa). Cysteine 326 acts as the Nucleophile in catalysis. Residue histidine 432 is part of the active site.

Belongs to the CobB/CobQ family. CobQ subfamily.

It participates in cofactor biosynthesis; adenosylcobalamin biosynthesis. In terms of biological role, catalyzes amidations at positions B, D, E, and G on adenosylcobyrinic A,C-diamide. NH(2) groups are provided by glutamine, and one molecule of ATP is hydrogenolyzed for each amidation. The polypeptide is Cobyric acid synthase (Clostridium botulinum (strain 657 / Type Ba4)).